Here is a 159-residue protein sequence, read N- to C-terminus: Ribosomal RNA large subunit methyltransferase H (159 aa).

S-adenosyl-L-methionine-binding positions include leucine 76, glycine 108, and 127–132 (FSKMTL).

The protein belongs to the RNA methyltransferase RlmH family. Homodimer.

The protein localises to the cytoplasm. It catalyses the reaction pseudouridine(1915) in 23S rRNA + S-adenosyl-L-methionine = N(3)-methylpseudouridine(1915) in 23S rRNA + S-adenosyl-L-homocysteine + H(+). Functionally, specifically methylates the pseudouridine at position 1915 (m3Psi1915) in 23S rRNA. The chain is Ribosomal RNA large subunit methyltransferase H from Bacillus cytotoxicus (strain DSM 22905 / CIP 110041 / 391-98 / NVH 391-98).